The following is a 249-amino-acid chain: Ribosomal RNA small subunit methyltransferase G (249 aa).

Residues glycine 88, phenylalanine 93, 111–113, 139–140, and arginine 158 contribute to the S-adenosyl-L-methionine site; these read DAT and AE.

Belongs to the methyltransferase superfamily. RNA methyltransferase RsmG family.

It localises to the cytoplasm. Specifically methylates the N7 position of a guanine in 16S rRNA. This is Ribosomal RNA small subunit methyltransferase G from Thermus thermophilus (strain ATCC BAA-163 / DSM 7039 / HB27).